The chain runs to 264 residues: 4-oxalocrotonate decarboxylase (264 aa).

The protein belongs to the hydratase/decarboxylase family.

It catalyses the reaction (3E)-2-oxohex-3-enedioate + H(+) = 2-oxopent-4-enoate + CO2. It participates in aromatic compound metabolism; benzoate degradation via hydroxylation. The protein is 4-oxalocrotonate decarboxylase (dmpH) of Pseudomonas sp. (strain CF600).